The following is a 229-amino-acid chain: Large ribosomal subunit protein uL1 (229 aa).

Belongs to the universal ribosomal protein uL1 family. Part of the 50S ribosomal subunit.

Functionally, binds directly to 23S rRNA. The L1 stalk is quite mobile in the ribosome, and is involved in E site tRNA release. In terms of biological role, protein L1 is also a translational repressor protein, it controls the translation of the L11 operon by binding to its mRNA. The chain is Large ribosomal subunit protein uL1 from Streptococcus pneumoniae (strain JJA).